Reading from the N-terminus, the 184-residue chain is F(420)H(2) dehydrogenase subunit B (184 aa).

Residues 1 to 20 (MGEVKETKTNNSKENPEEEV) are disordered. Residues Cys-61, Cys-62, Cys-126, and Cys-156 each coordinate [4Fe-4S] cluster.

Belongs to the complex I 20 kDa subunit family. In terms of assembly, the FPO complex is composed of at least 13 different subunits. The cofactor is FAD. [4Fe-4S] cluster serves as cofactor.

The protein resides in the cell inner membrane. The catalysed reaction is methanophenazine + reduced coenzyme F420-(gamma-L-Glu)(n) = dihydromethanophenazine + oxidized coenzyme F420-(gamma-L-Glu)(n) + H(+). Its function is as follows. Component of the F(420)H(2) dehydrogenase (FPO complex) which is part of the energy-conserving F(420)H(2):heterodisulfide oxidoreductase system. The membrane-bound electron transfer system of the complex plays an important role in the metabolism of methylotrophic methanogens when the organisms grow on methanol or methylamines. Catalyzes the oxidation of methanophenazine to dihydromethanophenazine. It shuttles electrons from F(420)H(2), via FAD and iron-sulfur (Fe-S) centers, to methanophenazine (an electron carrier in the membrane). It couples the redox reaction to proton translocation (for every two electrons transferred, two hydrogen ions are translocated across the cytoplasmic membrane), and thus conserves the redox energy in a proton gradient. It also catalyzes the oxidation of F(420)H(2) with quinones such as 2,3-dimethyl-1,4-naphthoquinone, 2-methyl-1,4-naphthoquinone and tetramethyl-p-benzoquinone. This chain is F(420)H(2) dehydrogenase subunit B (fpoB), found in Methanosarcina mazei (strain ATCC BAA-159 / DSM 3647 / Goe1 / Go1 / JCM 11833 / OCM 88) (Methanosarcina frisia).